The chain runs to 520 residues: MSAIAIIDFGSQFTQLIARQIREMDVYCEIFPSNISFETISKFNGFILSGGPQSVHDGCSEASGVAHEIIKFNEATNVPILGICYGQQLICHYFGAKVKKEFKQEFCKTKIKILKESSIVKDVWNVNSEVDVLMNHADSVETAPQGFTVIASGVINQTIAIVANEQRRIYCTQFHPEVKPTANGSKLLSNFLDIANCKRDWTMKSIIEKQKEKIKNVVGEKKVIAAVSGGVDSSVAVALTYKAVGKQLNCIFIDTGLLRKNQTIALLEEIPVNYVDKSNLFLSRLKGITDPEEKRKIIGNTFIEVFEEEAKKIGNADFLMQGTIYSDVVESGHASGNASTIKSHHNVGGLPEKMNLKLVEPLRYLFKDEVRLLGKEIGLSNEIIFQHPFPGPGLAVRVIGEVDEERVRILQEIDEIYINTMKNYDLYDKIWQAFAVLLPIRTVGVMGDGRTYGYVCALRAVTSFDGMTADAFPFENKSQHSLIFWDFLQNVSSIIVNNVSGVNRVVYDLTSKPPATIEWE.

The Glutamine amidotransferase type-1 domain maps to 3 to 200 (AIAIIDFGSQ…FLDIANCKRD (198 aa)). The active-site Nucleophile is the Cys84. Active-site residues include His175 and Glu177. Residues 201-386 (WTMKSIIEKQ…IGLSNEIIFQ (186 aa)) form the GMPS ATP-PPase domain. An ATP-binding site is contributed by 228–234 (SGGVDSS).

Homodimer.

It carries out the reaction XMP + L-glutamine + ATP + H2O = GMP + L-glutamate + AMP + diphosphate + 2 H(+). Its pathway is purine metabolism; GMP biosynthesis; GMP from XMP (L-Gln route): step 1/1. In terms of biological role, catalyzes the synthesis of GMP from XMP. In Wolbachia sp. subsp. Brugia malayi (strain TRS), this protein is GMP synthase [glutamine-hydrolyzing].